We begin with the raw amino-acid sequence, 610 residues long: Elongation factor 4 (610 aa).

The tr-type G domain maps to 13-195 (SHIRNFSIVA…AIVHKLPAPK (183 aa)). GTP-binding positions include 25–30 (DHGKST) and 142–145 (NKID).

This sequence belongs to the TRAFAC class translation factor GTPase superfamily. Classic translation factor GTPase family. LepA subfamily.

Its subcellular location is the cell inner membrane. The catalysed reaction is GTP + H2O = GDP + phosphate + H(+). Required for accurate and efficient protein synthesis under certain stress conditions. May act as a fidelity factor of the translation reaction, by catalyzing a one-codon backward translocation of tRNAs on improperly translocated ribosomes. Back-translocation proceeds from a post-translocation (POST) complex to a pre-translocation (PRE) complex, thus giving elongation factor G a second chance to translocate the tRNAs correctly. Binds to ribosomes in a GTP-dependent manner. In Rhizobium johnstonii (strain DSM 114642 / LMG 32736 / 3841) (Rhizobium leguminosarum bv. viciae), this protein is Elongation factor 4.